The following is a 513-amino-acid chain: ATP synthase subunit alpha (513 aa).

Position 169–176 (169–176 (GDRQTGKT)) interacts with ATP.

This sequence belongs to the ATPase alpha/beta chains family. F-type ATPases have 2 components, CF(1) - the catalytic core - and CF(0) - the membrane proton channel. CF(1) has five subunits: alpha(3), beta(3), gamma(1), delta(1), epsilon(1). CF(0) has three main subunits: a(1), b(2) and c(9-12). The alpha and beta chains form an alternating ring which encloses part of the gamma chain. CF(1) is attached to CF(0) by a central stalk formed by the gamma and epsilon chains, while a peripheral stalk is formed by the delta and b chains.

It is found in the cell inner membrane. It catalyses the reaction ATP + H2O + 4 H(+)(in) = ADP + phosphate + 5 H(+)(out). Functionally, produces ATP from ADP in the presence of a proton gradient across the membrane. The alpha chain is a regulatory subunit. The protein is ATP synthase subunit alpha of Yersinia pseudotuberculosis serotype O:1b (strain IP 31758).